The following is a 490-amino-acid chain: Monocarboxylate transporter 3 (490 aa).

Over 1-14 (MGAGGPRRGAGPPD) the chain is Cytoplasmic. Residues 15 to 35 (GGWGWVVLGACFVITGFAYGF) traverse the membrane as a helical segment. Topologically, residues 36–58 (PKAVSVFFRELKRDFGAGYSDTA) are extracellular. The helical transmembrane segment at 59–79 (WVSSIMLAMLYGTGPLSSILV) threads the bilayer. The Cytoplasmic portion of the chain corresponds to 80–85 (TRFGCR). Residues 86 to 106 (PVMLAGGLLASAGMILASFAS) form a helical membrane-spanning segment. Topologically, residues 107-115 (RLLELYLTA) are extracellular. The helical transmembrane segment at 116–136 (GVLTGLGLALNFQPSLIMLGL) threads the bilayer. The Cytoplasmic portion of the chain corresponds to 137–147 (YFERRRPLANG). Residues 148–168 (LAAAGSPVFLSTLSPLGQLLG) form a helical membrane-spanning segment. The Extracellular portion of the chain corresponds to 169-172 (ERFG). The helical transmembrane segment at 173-193 (WRGGFLLFGGLLLHCCACGAV) threads the bilayer. Residues 194 to 230 (MRPPPGPQPRPDPAPPGGRARHRQLLDLAVCTDRTFM) are Cytoplasmic-facing. A helical membrane pass occupies residues 231 to 251 (VYMVTKFLMALGLFVPAILLV). At 252 to 257 (NYAKDA) the chain is on the extracellular side. The helical transmembrane segment at 258 to 278 (GVPDAEAAFLLSIVGFVDIVA) threads the bilayer. The Cytoplasmic portion of the chain corresponds to 279–293 (RPACGALAGLGRLRP). Residues 294 to 314 (HVPYLFSLALLANGLTDLISA) traverse the membrane as a helical segment. The Extracellular portion of the chain corresponds to 315–318 (RARS). A helical membrane pass occupies residues 319–339 (YGTLVAFCIAFGLSYGMVGAL). Residues 340-352 (QFEVLMATVGAPR) are Cytoplasmic-facing. Residues 353–373 (FPSALGLVLLVEAVAVLIGPP) form a helical membrane-spanning segment. The Extracellular segment spans residues 374 to 386 (SAGRLVDALKNYE). The helical transmembrane segment at 387–407 (IIFYLAGSEVVLAGVFMAVTT) threads the bilayer. At 408 to 490 (YCCQRCSKDI…GGHEAHGQNA (83 aa)) the chain is on the cytoplasmic side. The interval 419-490 (PGPSAEGGTS…GGHEAHGQNA (72 aa)) is disordered. Basolateral sorting signal stretches follow at residues 426 to 460 (GTSD…VLSP) and 461 to 480 (RAGS…HESV). The span at 475 to 490 (LSHESVGGHEAHGQNA) shows a compositional bias: basic and acidic residues.

It belongs to the major facilitator superfamily. Monocarboxylate porter (TC 2.A.1.13) family. Retinal pigment epithelium.

It is found in the basolateral cell membrane. The catalysed reaction is (S)-lactate(in) + H(+)(in) = (S)-lactate(out) + H(+)(out). In terms of biological role, probable retinal pigment epithelium (RPE)-specific proton-coupled L-lactate transporter. May facilitate transport of lactate and H(+) out of the retina and could therefore play a role in pH and ion homeostasis of the outer retina. The protein is Monocarboxylate transporter 3 (Slc16a8) of Rattus norvegicus (Rat).